A 186-amino-acid chain; its full sequence is Protein SPMIP2 (186 aa).

The disordered stretch occupies residues 163 to 186 (SSLPRASKPPKLPKLPKKEKKRKH). Residues 176–186 (KLPKKEKKRKH) show a composition bias toward basic residues.

The chain is Protein SPMIP2 from Homo sapiens (Human).